Here is a 336-residue protein sequence, read N- to C-terminus: Holliday junction branch migration complex subunit RuvB (336 aa).

Positions 4–184 (ADRLVSADSS…FGIVQRLEFY (181 aa)) are large ATPase domain (RuvB-L). Residues Ile-23, Arg-24, Gly-65, Lys-68, Thr-69, Thr-70, 131–133 (EDY), Arg-174, Tyr-184, and Arg-221 contribute to the ATP site. Thr-69 contacts Mg(2+). Positions 185–255 (QIPDLQHIVS…IAAQALDMLN (71 aa)) are small ATPAse domain (RuvB-S). A head domain (RuvB-H) region spans residues 258–336 (AEGFDYMDRK…HFGITPPEMP (79 aa)). Residues Arg-294, Arg-313, and Arg-318 each contribute to the DNA site.

This sequence belongs to the RuvB family. In terms of assembly, homohexamer. Forms an RuvA(8)-RuvB(12)-Holliday junction (HJ) complex. HJ DNA is sandwiched between 2 RuvA tetramers; dsDNA enters through RuvA and exits via RuvB. An RuvB hexamer assembles on each DNA strand where it exits the tetramer. Each RuvB hexamer is contacted by two RuvA subunits (via domain III) on 2 adjacent RuvB subunits; this complex drives branch migration. In the full resolvosome a probable DNA-RuvA(4)-RuvB(12)-RuvC(2) complex forms which resolves the HJ.

It is found in the cytoplasm. It carries out the reaction ATP + H2O = ADP + phosphate + H(+). The RuvA-RuvB-RuvC complex processes Holliday junction (HJ) DNA during genetic recombination and DNA repair, while the RuvA-RuvB complex plays an important role in the rescue of blocked DNA replication forks via replication fork reversal (RFR). RuvA specifically binds to HJ cruciform DNA, conferring on it an open structure. The RuvB hexamer acts as an ATP-dependent pump, pulling dsDNA into and through the RuvAB complex. RuvB forms 2 homohexamers on either side of HJ DNA bound by 1 or 2 RuvA tetramers; 4 subunits per hexamer contact DNA at a time. Coordinated motions by a converter formed by DNA-disengaged RuvB subunits stimulates ATP hydrolysis and nucleotide exchange. Immobilization of the converter enables RuvB to convert the ATP-contained energy into a lever motion, pulling 2 nucleotides of DNA out of the RuvA tetramer per ATP hydrolyzed, thus driving DNA branch migration. The RuvB motors rotate together with the DNA substrate, which together with the progressing nucleotide cycle form the mechanistic basis for DNA recombination by continuous HJ branch migration. Branch migration allows RuvC to scan DNA until it finds its consensus sequence, where it cleaves and resolves cruciform DNA. This Klebsiella pneumoniae subsp. pneumoniae (strain ATCC 700721 / MGH 78578) protein is Holliday junction branch migration complex subunit RuvB.